The following is a 303-amino-acid chain: Counting factor 50 (303 aa).

The signal sequence occupies residues 1–24; the sequence is MNKMNNIFLIISSIILSIVIFVSG. Residues 28 to 240 enclose the Ch-type lysozyme domain; it reads IDFSSEISVG…CSTSSGSASG (213 aa). N-linked (GlcNAc...) asparagine glycosylation occurs at Asn67. Residue Glu125 is part of the active site. Asn170 carries an N-linked (GlcNAc...) asparagine glycan. An S-G-S motif repeats region spans residues 226–303; it reads GSGSGCSTSS…GSGTGSGSSI (78 aa). Residues 236–292 are compositionally biased toward low complexity; sequence GSASGSASGSASGSASGSNSGSSNSGSSNSGSSNSGSNSGSSNSGSGNSGSSNSGSA. The disordered stretch occupies residues 236-303; sequence GSASGSASGS…GSGTGSGSSI (68 aa). Residues 293–303 are compositionally biased toward gly residues; sequence SGSGTGSGSSI.

Belongs to the glycosyl hydrolase 25 family. In terms of assembly, monomer. Component of the counting factor (CF) complex, which includes cf60, cf50, cf45-1 and ctnA.

It localises to the secreted. It catalyses the reaction Hydrolysis of (1-&gt;4)-beta-linkages between N-acetylmuramic acid and N-acetyl-D-glucosamine residues in a peptidoglycan and between N-acetyl-D-glucosamine residues in chitodextrins.. In terms of biological role, cell-counting factor that limits the maximum size of the multicellular structure during aggregation. Has a very low lysozyme activity. The chain is Counting factor 50 (cf50-1) from Dictyostelium discoideum (Social amoeba).